The sequence spans 34 residues: COP9 signalosome complex subunit 5a (34 aa).

Belongs to the peptidase M67A family. CSN5 subfamily. As to quaternary structure, component of the CSN complex, probably composed of CSN1, CSN2, CSN3, CSN4, CSN5 (CSN5A or CSN5B), CSN6 (CSN6A or CSN6B), CSN7 and CSN8. Requires a divalent metal cation as cofactor.

It is found in the cytoplasm. It localises to the nucleus. Probable protease subunit of the COP9 signalosome complex (CSN), a complex involved in various cellular and developmental processes such as photomorphogenesis and auxin and jasmonate responses. The CSN complex is an essential regulator of the ubiquitin (Ubl) conjugation pathway by mediating the deneddylation of the cullin subunits of the SCF-type E3 ligase complexes, leading to decrease the Ubl ligase activity of SCF. In the complex, it probably acts as the catalytic center that mediates the cleavage of Nedd8 from cullins. It however has no metalloprotease activity by itself and requires the other subunits of the CSN complex. The CSN complex is involved in repression of photomorphogenesis in darkness by regulating the activity of COP1-containing Ubl ligase complexes. The chain is COP9 signalosome complex subunit 5a (CSN5A) from Brassica oleracea (Wild cabbage).